Here is a 346-residue protein sequence, read N- to C-terminus: Methylthioribose-1-phosphate isomerase 1 (346 aa).

Residues 48–50, Arg-91, and Gln-196 each bind substrate; that span reads RGA. Asp-237 (proton donor) is an active-site residue. 247–248 provides a ligand contact to substrate; sequence NK.

It belongs to the eIF-2B alpha/beta/delta subunits family. MtnA subfamily.

It carries out the reaction 5-(methylsulfanyl)-alpha-D-ribose 1-phosphate = 5-(methylsulfanyl)-D-ribulose 1-phosphate. Its pathway is amino-acid biosynthesis; L-methionine biosynthesis via salvage pathway; L-methionine from S-methyl-5-thio-alpha-D-ribose 1-phosphate: step 1/6. Catalyzes the interconversion of methylthioribose-1-phosphate (MTR-1-P) into methylthioribulose-1-phosphate (MTRu-1-P). The polypeptide is Methylthioribose-1-phosphate isomerase 1 (Pseudothermotoga lettingae (strain ATCC BAA-301 / DSM 14385 / NBRC 107922 / TMO) (Thermotoga lettingae)).